The following is a 70-amino-acid chain: Large ribosomal subunit protein uL30 (70 aa).

The protein belongs to the universal ribosomal protein uL30 family. In terms of assembly, part of the 50S ribosomal subunit.

This Renibacterium salmoninarum (strain ATCC 33209 / DSM 20767 / JCM 11484 / NBRC 15589 / NCIMB 2235) protein is Large ribosomal subunit protein uL30.